Consider the following 251-residue polypeptide: GTP cyclohydrolase 1 type 2 homolog (251 aa).

Positions 63, 64, 101, 219, and 223 each coordinate a divalent metal cation.

It belongs to the GTP cyclohydrolase I type 2/NIF3 family. Homohexamer.

In Pasteurella multocida (strain Pm70), this protein is GTP cyclohydrolase 1 type 2 homolog.